The chain runs to 702 residues: Ribosomal RNA large subunit methyltransferase K/L (702 aa).

The 112-residue stretch at 43–154 (LIYQSLMWSR…KETASIALDL (112 aa)) folds into the THUMP domain.

The protein belongs to the methyltransferase superfamily. RlmKL family.

Its subcellular location is the cytoplasm. The enzyme catalyses guanosine(2445) in 23S rRNA + S-adenosyl-L-methionine = N(2)-methylguanosine(2445) in 23S rRNA + S-adenosyl-L-homocysteine + H(+). The catalysed reaction is guanosine(2069) in 23S rRNA + S-adenosyl-L-methionine = N(2)-methylguanosine(2069) in 23S rRNA + S-adenosyl-L-homocysteine + H(+). Functionally, specifically methylates the guanine in position 2445 (m2G2445) and the guanine in position 2069 (m7G2069) of 23S rRNA. This chain is Ribosomal RNA large subunit methyltransferase K/L, found in Salmonella agona (strain SL483).